The chain runs to 161 residues: Phosphopantetheine adenylyltransferase (161 aa).

Position 9 (S9) interacts with substrate. ATP-binding positions include 9–10 (SF) and H17. Positions 41, 73, and 87 each coordinate substrate. Residues 88-90 (GLR), E98, and 123-129 (FAHISST) contribute to the ATP site.

This sequence belongs to the bacterial CoaD family. As to quaternary structure, homohexamer. It depends on Mg(2+) as a cofactor.

It is found in the cytoplasm. It catalyses the reaction (R)-4'-phosphopantetheine + ATP + H(+) = 3'-dephospho-CoA + diphosphate. It functions in the pathway cofactor biosynthesis; coenzyme A biosynthesis; CoA from (R)-pantothenate: step 4/5. Functionally, reversibly transfers an adenylyl group from ATP to 4'-phosphopantetheine, yielding dephospho-CoA (dPCoA) and pyrophosphate. This Chloroflexus aggregans (strain MD-66 / DSM 9485) protein is Phosphopantetheine adenylyltransferase.